Here is a 363-residue protein sequence, read N- to C-terminus: 3-dehydroquinate synthase (363 aa).

Residues 103–107 (GAVGD), 127–128 (TT), lysine 139, lysine 148, and 166–169 (FSET) each bind NAD(+). 3 residues coordinate Zn(2+): glutamate 181, histidine 243, and histidine 260.

This sequence belongs to the sugar phosphate cyclases superfamily. Dehydroquinate synthase family. The cofactor is Co(2+). Requires Zn(2+) as cofactor. NAD(+) serves as cofactor.

It localises to the cytoplasm. The catalysed reaction is 7-phospho-2-dehydro-3-deoxy-D-arabino-heptonate = 3-dehydroquinate + phosphate. Its pathway is metabolic intermediate biosynthesis; chorismate biosynthesis; chorismate from D-erythrose 4-phosphate and phosphoenolpyruvate: step 2/7. Functionally, catalyzes the conversion of 3-deoxy-D-arabino-heptulosonate 7-phosphate (DAHP) to dehydroquinate (DHQ). In Lysinibacillus sphaericus (strain C3-41), this protein is 3-dehydroquinate synthase.